A 389-amino-acid polypeptide reads, in one-letter code: S-adenosylmethionine synthase 2 (389 aa).

Position 17 (His17) interacts with ATP. Residue Asp19 participates in Mg(2+) binding. K(+) is bound at residue Glu45. The L-methionine site is built by Glu58 and Gln102. The flexible loop stretch occupies residues 102 to 112; sequence QSADIAVGVDA. ATP contacts are provided by residues 166–168, 231–232, Asp240, 246–247, Ala263, and Lys267; these read DSK, RF, and RK. Position 240 (Asp240) interacts with L-methionine. Lys271 is an L-methionine binding site.

It belongs to the AdoMet synthase family. Homotetramer; dimer of dimers. The cofactor is Mg(2+). Requires K(+) as cofactor.

The protein localises to the cytoplasm. The catalysed reaction is L-methionine + ATP + H2O = S-adenosyl-L-methionine + phosphate + diphosphate. The protein operates within amino-acid biosynthesis; S-adenosyl-L-methionine biosynthesis; S-adenosyl-L-methionine from L-methionine: step 1/1. In terms of biological role, catalyzes the formation of S-adenosylmethionine (AdoMet) from methionine and ATP. The overall synthetic reaction is composed of two sequential steps, AdoMet formation and the subsequent tripolyphosphate hydrolysis which occurs prior to release of AdoMet from the enzyme. This is S-adenosylmethionine synthase 2 from Rhodospirillum rubrum (strain ATCC 11170 / ATH 1.1.1 / DSM 467 / LMG 4362 / NCIMB 8255 / S1).